The sequence spans 486 residues: Glutamyl-tRNA(Gln) amidotransferase subunit A (486 aa).

Residues Lys75 and Ser150 each act as charge relay system in the active site. Ser174 functions as the Acyl-ester intermediate in the catalytic mechanism.

The protein belongs to the amidase family. GatA subfamily. As to quaternary structure, heterotrimer of A, B and C subunits.

The enzyme catalyses L-glutamyl-tRNA(Gln) + L-glutamine + ATP + H2O = L-glutaminyl-tRNA(Gln) + L-glutamate + ADP + phosphate + H(+). Functionally, allows the formation of correctly charged Gln-tRNA(Gln) through the transamidation of misacylated Glu-tRNA(Gln) in organisms which lack glutaminyl-tRNA synthetase. The reaction takes place in the presence of glutamine and ATP through an activated gamma-phospho-Glu-tRNA(Gln). The polypeptide is Glutamyl-tRNA(Gln) amidotransferase subunit A (Nostoc punctiforme (strain ATCC 29133 / PCC 73102)).